A 385-amino-acid polypeptide reads, in one-letter code: MTTDAELRELTVGTGAGGEQLGTDMVLNIGPQHPSTHGVLRLRLVLDGERVVSAEPIVGYMHRGAEKLFEVRDYRQIIVLANRHDWLSAFANELGVVLAVERLMGMEVPERATWLRMALAELNRVLNHLMFLGSYPLEIGAITPMFYAFRERETLQAVLEEVSGGRIHYMFNRVGGLKEEVPAGWTGRARTAIGEVRRRMPDLDRLIRRNEIFLARTVGVGVLSAAQAAAFGASGPVARASGLDLDLRRDEPYLAYDQLEVPVVTRTAGDCHSRFEVLLDQVYVSLDLAEQCLDQVDRLTGPVNTRLPKVLKAPEGHTYAWTENPLGINGYYLVSRGEKTPWRLKLRTASYANVQALATLLPGCLVPDLIAILGSMFFVVGDIDK.

It belongs to the complex I 49 kDa subunit family. NDH-1 is composed of 14 different subunits. Subunits NuoB, C, D, E, F, and G constitute the peripheral sector of the complex.

The protein resides in the cell membrane. The catalysed reaction is a quinone + NADH + 5 H(+)(in) = a quinol + NAD(+) + 4 H(+)(out). In terms of biological role, NDH-1 shuttles electrons from NADH, via FMN and iron-sulfur (Fe-S) centers, to quinones in the respiratory chain. The immediate electron acceptor for the enzyme in this species is believed to be a menaquinone. Couples the redox reaction to proton translocation (for every two electrons transferred, four hydrogen ions are translocated across the cytoplasmic membrane), and thus conserves the redox energy in a proton gradient. This chain is NADH-quinone oxidoreductase subunit D 2, found in Salinispora arenicola (strain CNS-205).